The following is a 210-amino-acid chain: Phosphoribosyl-dephospho-CoA transferase (210 aa).

Catalysis depends on residues D135 and D137.

It belongs to the MdcG family.

The catalysed reaction is apo-[malonate decarboxylase ACP] + 2'-(5''-triphospho-alpha-D-ribosyl)-3'-dephospho-CoA = holo-[malonate decarboxylase ACP] + diphosphate. Its function is as follows. Transfers 2'-(5-triphosphoribosyl)-3'-dephosphocoenzyme-A to the apo-[acyl-carrier-protein] of the malonate decarboxylase to yield holo-[acyl-carrier-protein]. In Pseudomonas aeruginosa (strain ATCC 15692 / DSM 22644 / CIP 104116 / JCM 14847 / LMG 12228 / 1C / PRS 101 / PAO1), this protein is Phosphoribosyl-dephospho-CoA transferase.